The sequence spans 74 residues: Mitochondrial import receptor subunit TOM6 homolog (74 aa).

The span at 1–20 (MASSGVTVSAAGSASEASEV) shows a compositional bias: low complexity. The interval 1-21 (MASSGVTVSAAGSASEASEVP) is disordered. An N-acetylalanine modification is found at Ala2.

This sequence belongs to the Tom6 family. Forms part of the preprotein translocase complex of the outer mitochondrial membrane (TOM complex) which consists of at least 7 different proteins (TOMM5, TOMM6, TOMM7, TOMM20, TOMM22, TOMM40 and TOMM70).

The protein resides in the mitochondrion outer membrane. This is Mitochondrial import receptor subunit TOM6 homolog (Tomm6) from Mus musculus (Mouse).